Consider the following 280-residue polypeptide: NAD kinase (280 aa).

Residue Asp67 is the Proton acceptor of the active site. Residues 67 to 68 (DG), Arg72, 138 to 139 (ND), Asp167, Ala175, 178 to 183 (TAYSLS), and Gln237 contribute to the NAD(+) site.

It belongs to the NAD kinase family. It depends on a divalent metal cation as a cofactor.

Its subcellular location is the cytoplasm. It catalyses the reaction NAD(+) + ATP = ADP + NADP(+) + H(+). In terms of biological role, involved in the regulation of the intracellular balance of NAD and NADP, and is a key enzyme in the biosynthesis of NADP. Catalyzes specifically the phosphorylation on 2'-hydroxyl of the adenosine moiety of NAD to yield NADP. This is NAD kinase from Aeropyrum pernix (strain ATCC 700893 / DSM 11879 / JCM 9820 / NBRC 100138 / K1).